A 99-amino-acid chain; its full sequence is DNA-directed RNA polymerase subunit Rpo11 (99 aa).

The protein belongs to the archaeal Rpo11/eukaryotic RPB11/RPC19 RNA polymerase subunit family. In terms of assembly, part of the RNA polymerase complex.

Its subcellular location is the cytoplasm. It catalyses the reaction RNA(n) + a ribonucleoside 5'-triphosphate = RNA(n+1) + diphosphate. DNA-dependent RNA polymerase (RNAP) catalyzes the transcription of DNA into RNA using the four ribonucleoside triphosphates as substrates. The sequence is that of DNA-directed RNA polymerase subunit Rpo11 from Aeropyrum pernix (strain ATCC 700893 / DSM 11879 / JCM 9820 / NBRC 100138 / K1).